We begin with the raw amino-acid sequence, 170 residues long: Disulfide bond formation protein B (170 aa).

The Cytoplasmic portion of the chain corresponds to 1–14; that stretch reads MNDSTLALRRERRL. Residues 15 to 31 traverse the membrane as a helical segment; it reads LMLLGWVCIALLAGALY. The Periplasmic portion of the chain corresponds to 32 to 49; that stretch reads LQYVKNEDPCPLCIIQRY. A disulfide bridge links C41 with C44. A helical transmembrane segment spans residues 50-64; sequence FFAAIGIFAFLAAGI. Residues 65–71 are Cytoplasmic-facing; sequence RNWRVIW. A helical transmembrane segment spans residues 72–89; that stretch reads VFELLIAIAAAGGVGTAA. Topologically, residues 90–144 are periplasmic; sequence RHLSIQMNPGFSCGFDTLQPIVDSLPPAQWFPGMFKVAGLCETVYPPIFGILLPG. A disulfide bridge connects residues C102 and C130. The helical transmembrane segment at 145–163 threads the bilayer; the sequence is WALIGFAVILVAVASSLWR. The Cytoplasmic portion of the chain corresponds to 164–170; that stretch reads HRRKLAG.

Belongs to the DsbB family.

It is found in the cell inner membrane. Its function is as follows. Required for disulfide bond formation in some periplasmic proteins. Acts by oxidizing the DsbA protein. This Burkholderia ambifaria (strain ATCC BAA-244 / DSM 16087 / CCUG 44356 / LMG 19182 / AMMD) (Burkholderia cepacia (strain AMMD)) protein is Disulfide bond formation protein B.